Consider the following 278-residue polypeptide: MCRRPDCGFSFSPGPVILLWCCLLLPIVSSAAVSVAPTAAEKVPAECPELTRRCLLGEVFQGDKYESWLRPLVNVTGRDGPLSQLIRYRPVTPEAANSVLLDEAFLDTLALLYNNPDQLRALLTLLSSDTAPRWMTVMRGYSECGDGSPAVYTCVDDLCRGYDLTRLSYGRSIFTEHVLGFELVPPSLFNVVVAIRNEATRTNRAVRLPVSTAAAPEGITLFYGLYNGVKEFCLRHQLDPPLLRHLDKYYAGLPPELKQTRVNLPAHSRYGPQAVDAR.

Positions 1 to 30 (MCRRPDCGFSFSPGPVILLWCCLLLPIVSS) are cleaved as a signal peptide. Residues 43 to 256 (VPAECPELTR…DKYYAGLPPE (214 aa)) form the gL betaherpesvirus-type domain. An intrachain disulfide couples Cys154 to Cys159.

It belongs to the herpesviridae glycoprotein L (gL) family. Betaherpesvirinae gL subfamily. In terms of assembly, interacts with glycoprotein H (gH); this interaction is necessary for the correct processing and cell surface expression of gH. Forms the envelope pentamer complex (PC) composed of gH, gL, UL128, UL130, and UL131A. The pentamer interacts with host NRP2. Forms the envelope trimer complex composed of gH, gL, and gO. The trimer interacts with host PDGFRA. The trimer also interacts with host EPHA2.

The protein localises to the virion membrane. It localises to the host cell membrane. Its subcellular location is the host Golgi apparatus. It is found in the host trans-Golgi network. The heterodimer glycoprotein H-glycoprotein L is required for the fusion of viral and plasma membranes leading to virus entry into the host cell. Acts as a functional inhibitor of gH and maintains gH in an inhibited form. Upon binding to host integrins, gL dissociates from gH leading to activation of the viral fusion glycoproteins gB and gH. In human cytomegalovirus, forms two distincts complexes to mediate viral entry, a trimer and a pentamer at the surface of the virion envelope. The gH-gL-gO trimer is required for infection in fibroblasts by interacting with host PDGFRA, and in glioblastoma cells by interacting with host EPHA2. The gH-gL-UL128-UL130-UL131A pentamer is essential for viral entry in epithelial, endothelial and myeloid cells via interaction with host NRP2. The protein is Envelope glycoprotein L of Homo sapiens (Human).